The following is an 85-amino-acid chain: Beta-insect depressant toxin Lqh-dprIT3e (85 aa).

The first 21 residues, 1-21 (MKLLLLLTISASMLIEGLVNA), serve as a signal peptide directing secretion. The LCN-type CS-alpha/beta domain maps to 22 to 82 (DGYIRGGDGC…EWDYETDTCG (61 aa)). Disulfide bonds link Cys31/Cys81, Cys35/Cys56, Cys42/Cys63, and Cys46/Cys65. Gly82 is subject to Glycine amide.

Belongs to the long (4 C-C) scorpion toxin superfamily. Sodium channel inhibitor family. Beta subfamily. In terms of tissue distribution, expressed by the venom gland.

It localises to the secreted. Its function is as follows. Depressant insect beta-toxins cause a transient contraction paralysis followed by a slow flaccid paralysis. They bind voltage-independently at site-4 of sodium channels (Nav) and block action potentials, primarily by depolarizing the axonal membrane and suppressing the sodium current. This depressant toxin is active only on insects. It is found in a relatively small amount in the venom. The sequence is that of Beta-insect depressant toxin Lqh-dprIT3e from Leiurus hebraeus (Hebrew deathstalker scorpion).